Reading from the N-terminus, the 320-residue chain is Cytochrome f (320 aa).

The N-terminal stretch at 1 to 35 (MQTRNTFSWIREEITRSISVSLIIYIITWASISSA) is a signal peptide. Residues Tyr-36, Cys-56, Cys-59, and His-60 each coordinate heme. The helical transmembrane segment at 286 to 305 (VQGLLFFLGSVVLAQIFLVL) threads the bilayer.

The protein belongs to the cytochrome f family. The 4 large subunits of the cytochrome b6-f complex are cytochrome b6, subunit IV (17 kDa polypeptide, petD), cytochrome f and the Rieske protein, while the 4 small subunits are PetG, PetL, PetM and PetN. The complex functions as a dimer. Heme serves as cofactor.

The protein resides in the plastid. Its subcellular location is the chloroplast thylakoid membrane. In terms of biological role, component of the cytochrome b6-f complex, which mediates electron transfer between photosystem II (PSII) and photosystem I (PSI), cyclic electron flow around PSI, and state transitions. The chain is Cytochrome f (petA) from Arabidopsis thaliana (Mouse-ear cress).